The sequence spans 176 residues: Ferritin, liver middle subunit (176 aa).

In terms of domain architecture, Ferritin-like diiron spans 7–156; sequence QNYHRDCEAA…DFITNLSRMD (150 aa). Fe cation-binding residues include E24, E59, H62, E104, and Q138.

The protein belongs to the ferritin family. In terms of assembly, in liver, forms a heteromer consisting of middle and heavy subunits. The functional molecule forms a roughly spherical shell with a diameter of 12 nm and contains a central cavity into which the insoluble mineral iron core is deposited. In terms of tissue distribution, liver (at protein level).

It catalyses the reaction 4 Fe(2+) + O2 + 4 H(+) = 4 Fe(3+) + 2 H2O. Its function is as follows. Stores iron in a soluble, non-toxic, readily available form. Important for iron homeostasis. Has ferroxidase activity. Iron is taken up in the ferrous form and deposited as ferric hydroxides after oxidation. This chain is Ferritin, liver middle subunit, found in Trematomus bernacchii (Emerald rockcod).